A 43-amino-acid polypeptide reads, in one-letter code: Protein PsbN (43 aa).

Residues 5 to 27 (TVLSIFISSLLLGITGYSIYTAF) traverse the membrane as a helical segment.

Belongs to the PsbN family.

It localises to the plastid. It is found in the chloroplast thylakoid membrane. In terms of biological role, may play a role in photosystem I and II biogenesis. This chain is Protein PsbN, found in Porphyra purpurea (Red seaweed).